The chain runs to 434 residues: Glutamate-1-semialdehyde 2,1-aminomutase (434 aa).

At K270 the chain carries N6-(pyridoxal phosphate)lysine.

This sequence belongs to the class-III pyridoxal-phosphate-dependent aminotransferase family. HemL subfamily. Homodimer. Requires pyridoxal 5'-phosphate as cofactor.

It is found in the cytoplasm. The catalysed reaction is (S)-4-amino-5-oxopentanoate = 5-aminolevulinate. It functions in the pathway porphyrin-containing compound metabolism; protoporphyrin-IX biosynthesis; 5-aminolevulinate from L-glutamyl-tRNA(Glu): step 2/2. This is Glutamate-1-semialdehyde 2,1-aminomutase from Pelotomaculum thermopropionicum (strain DSM 13744 / JCM 10971 / SI).